The sequence spans 115 residues: HTH-type transcriptional regulator SarR (115 aa).

Positions 51–74 (SKEIAKCSEFKPYYLTKALQKLKD) form a DNA-binding region, H-T-H motif.

It belongs to the SarA family. As to quaternary structure, homodimer.

The protein resides in the cytoplasm. In terms of biological role, negative regulator of sarA transcription at late exponential and stationary growth phases. It contributes to the modulation of target genes downstream of the sarA regulatory cascade. Also, positively regulates expression of primary transcripts RNAII and RNAIII generated by agr (virulence accessory gene regulator) locus. The sequence is that of HTH-type transcriptional regulator SarR (sarR) from Staphylococcus aureus (strain NCTC 8325 / PS 47).